The following is an 89-amino-acid chain: MSLNAETKAAIVAEYAQSEGDTGSPEVQVALLTASINHLQGHFKAHKHDHHSRRGLLRMVSSRRKLLDYLKGKNLTRYQDLIKRLGLRR.

This sequence belongs to the universal ribosomal protein uS15 family. Part of the 30S ribosomal subunit. Forms a bridge to the 50S subunit in the 70S ribosome, contacting the 23S rRNA.

In terms of biological role, one of the primary rRNA binding proteins, it binds directly to 16S rRNA where it helps nucleate assembly of the platform of the 30S subunit by binding and bridging several RNA helices of the 16S rRNA. Functionally, forms an intersubunit bridge (bridge B4) with the 23S rRNA of the 50S subunit in the ribosome. The protein is Small ribosomal subunit protein uS15 of Vibrio atlanticus (strain LGP32) (Vibrio splendidus (strain Mel32)).